We begin with the raw amino-acid sequence, 368 residues long: Phosphate acyltransferase (368 aa).

The tract at residues 335–368 (VSLGDGEHDAGGAGPASPAAGHHAEPSAAQSSKA) is disordered. Residues 349–368 (PASPAAGHHAEPSAAQSSKA) show a composition bias toward low complexity.

The protein belongs to the PlsX family. In terms of assembly, homodimer. Probably interacts with PlsY.

Its subcellular location is the cytoplasm. The catalysed reaction is a fatty acyl-[ACP] + phosphate = an acyl phosphate + holo-[ACP]. The protein operates within lipid metabolism; phospholipid metabolism. In terms of biological role, catalyzes the reversible formation of acyl-phosphate (acyl-PO(4)) from acyl-[acyl-carrier-protein] (acyl-ACP). This enzyme utilizes acyl-ACP as fatty acyl donor, but not acyl-CoA. In Burkholderia multivorans (strain ATCC 17616 / 249), this protein is Phosphate acyltransferase.